Here is a 164-residue protein sequence, read N- to C-terminus: Ecotin (164 aa).

An N-terminal signal peptide occupies residues 1-20; the sequence is MKMFVPAVVFAALASASAWA. C72 and C109 are disulfide-bonded.

Belongs to the protease inhibitor I11 (ecotin) family. In terms of assembly, homodimer.

It localises to the periplasm. General inhibitor of pancreatic serine proteases: inhibits chymotrypsin, trypsin, elastases, factor X, kallikrein as well as a variety of other proteases. The chain is Ecotin from Salmonella enteritidis PT4 (strain P125109).